The following is a 239-amino-acid chain: Ribosomal RNA small subunit methyltransferase G (239 aa).

S-adenosyl-L-methionine-binding positions include Gly-77, Phe-82, Ala-128–Glu-129, and Arg-146. The segment at Asp-215–Lys-239 is disordered.

It belongs to the methyltransferase superfamily. RNA methyltransferase RsmG family.

Its subcellular location is the cytoplasm. Functionally, specifically methylates the N7 position of guanine in position 535 of 16S rRNA. This is Ribosomal RNA small subunit methyltransferase G from Staphylococcus saprophyticus subsp. saprophyticus (strain ATCC 15305 / DSM 20229 / NCIMB 8711 / NCTC 7292 / S-41).